The sequence spans 487 residues: b(0,+)-type amino acid transporter 1 (487 aa).

Residues 1-22 (MGETVPRRRREDEKSIQSDEPK) form a disordered region. At 1–31 (MGETVPRRRREDEKSIQSDEPKTTSLQKEVG) the chain is on the cytoplasmic side. Ser18 is modified (phosphoserine). Residues 32–55 (LISGICIIVGTIIGSGIFISPKSV) form a helical membrane-spanning segment. 43–47 (IIGSG) is an L-arginine binding site. The Extracellular segment spans residues 56–62 (LSNTQAV). Residues 63-84 (GPCLIIWAACGVLGTLGALCFA) form a helical membrane-spanning segment. Residues 85 to 110 (ELGTMITKSGGEYPYLMEAFGPIPAY) are Cytoplasmic-facing. Residues 111 to 137 (LFSWSSLLVMKPSSFAIICLSFSEYVA) traverse the membrane as a helical segment. The Extracellular segment spans residues 138 to 147 (TPFYSGCEPP). The next 2 membrane-spanning stretches (helical) occupy residues 148–169 (KVVVKCLAAAAIMLITTVNSLS) and 170–193 (VRLGSYVQNFFTAAKLVIVAIIII). Residues 194-217 (SGLVLLAQGNTKNFENSFEGAEVS) lie on the Extracellular side of the membrane. The helical transmembrane segment at 218 to 238 (VGAISLALYNGLWAYDGWNQL) threads the bilayer. Asp233 is an L-arginine binding site. Over 239-251 (NYITEELRNPFRN) the chain is Cytoplasmic. Residues 252-274 (LPLAIIFGIPLVTVCYILINISY) form a helical membrane-spanning segment. The Extracellular segment spans residues 275-302 (FTVMTPTELLQSQAVAVTFGDRVLYPAS). The helical transmembrane segment at 303 to 325 (WIVPVFVAFSTIGAANGTCFTAG) threads the bilayer. Topologically, residues 326 to 351 (RLVYVAGREGHMLKVLSYISVRRLTP) are cytoplasmic. 2 helical membrane passes run 352–370 (APAIIFYGIVATIYIIPGD) and 371–391 (INSLVNYFSFATWLFYGLTIL). Residues 392–410 (GLIVMRFTRKELERPIKVP) lie on the Cytoplasmic side of the membrane. The chain crosses the membrane as a helical span at residues 411–431 (IFIPILVTFIAAFLVLAPVIT). Residues 432–434 (NPA) lie on the Extracellular side of the membrane. Residues 435–450 (WEYLYCVLFILSGLVF) traverse the membrane as a helical segment. Residues 451–487 (YFLFVYYKFEWAQKISKPITMHLQMLMEVVPPEPDPK) are Cytoplasmic-facing.

It belongs to the amino acid-polyamine-organocation (APC) superfamily. As to quaternary structure, disulfide-linked heterodimer composed of the catalytic light chain subunit SLC7A9 and the heavy chain subunit. The heterodimer is the minimal functional unit. Assembles in heterotetramers (dimers of heterodimers) and higher order oligomers. Interacts with CAV1. In terms of tissue distribution, kidney and small intestine.

The protein localises to the apical cell membrane. It carries out the reaction L-leucine(out) + L-arginine(in) = L-leucine(in) + L-arginine(out). It catalyses the reaction L-histidine(out) + L-arginine(in) = L-histidine(in) + L-arginine(out). The catalysed reaction is L-arginine(in) + L-phenylalanine(out) = L-arginine(out) + L-phenylalanine(in). The enzyme catalyses L-cysteine(out) + L-arginine(in) = L-cysteine(in) + L-arginine(out). It carries out the reaction L-cystine(out) + L-arginine(in) = L-cystine(in) + L-arginine(out). It catalyses the reaction L-lysine(out) + L-arginine(in) = L-lysine(in) + L-arginine(out). Mediates the electrogenic exchange between cationic amino acids and neutral amino acids, with a stoichiometry of 1:1. Has system b(0,+)-like activity with high affinity for extracellular cationic amino acids and L-cystine and lower affinity for intracellular neutral amino acids. Substrate exchange is driven by high concentration of intracellular neutral amino acids and the intracellular reduction of L-cystine to L-cysteine. Required for reabsorption of L-cystine and dibasic amino acids across the brush border membrane in renal proximal tubules. This is b(0,+)-type amino acid transporter 1 from Oryctolagus cuniculus (Rabbit).